We begin with the raw amino-acid sequence, 171 residues long: UPF0398 protein M6_Spy1399 (171 aa).

The protein belongs to the UPF0398 family.

This chain is UPF0398 protein M6_Spy1399, found in Streptococcus pyogenes serotype M6 (strain ATCC BAA-946 / MGAS10394).